We begin with the raw amino-acid sequence, 265 residues long: Cytochrome b-c1 complex subunit Rieske, mitochondrial (265 aa).

Residues 1 to 53 (MLRVAGRRLSSSAARSSSTFFTRSSFTVTDDSSPARSPSPSLTSSFLDQIRGF) constitute a mitochondrion transit peptide. Residues 54–102 (SSNSVSPAHQLGLVSDLPATVAAIKNPSSKIVYDDSNHERYPPGDPSKR) lie on the Mitochondrial matrix side of the membrane. Residues 103-125 (AFAYFVLTGGRFVYASSVRLLIL) traverse the membrane as a helical segment. The Mitochondrial intermembrane portion of the chain corresponds to 126 to 265 (KFVLSMSASK…FLEENKLLIG (140 aa)). Residues 175–263 (IKLANSVDLG…YSFLEENKLL (89 aa)) form the Rieske domain. [2Fe-2S] cluster-binding residues include cysteine 208, histidine 210, cysteine 227, and histidine 230. Cysteine 213 and cysteine 229 are joined by a disulfide.

The protein belongs to the Rieske iron-sulfur protein family. As to quaternary structure, component of the ubiquinol-cytochrome c oxidoreductase (cytochrome b-c1 complex, complex III, CIII), a multisubunit enzyme composed of 3 respiratory subunits cytochrome b, cytochrome c1 and Rieske protein, 2 core protein subunits, and several low-molecular weight protein subunits. The complex exists as an obligatory dimer and forms supercomplexes (SCs) in the inner mitochondrial membrane with cytochrome c oxidase (complex IV, CIV). [2Fe-2S] cluster serves as cofactor.

The protein resides in the mitochondrion inner membrane. The enzyme catalyses a quinol + 2 Fe(III)-[cytochrome c](out) = a quinone + 2 Fe(II)-[cytochrome c](out) + 2 H(+)(out). Functionally, component of the ubiquinol-cytochrome c oxidoreductase, a multisubunit transmembrane complex that is part of the mitochondrial electron transport chain which drives oxidative phosphorylation. The respiratory chain contains 3 multisubunit complexes succinate dehydrogenase (complex II, CII), ubiquinol-cytochrome c oxidoreductase (cytochrome b-c1 complex, complex III, CIII) and cytochrome c oxidase (complex IV, CIV), that cooperate to transfer electrons derived from NADH and succinate to molecular oxygen, creating an electrochemical gradient over the inner membrane that drives transmembrane transport and the ATP synthase. The cytochrome b-c1 complex catalyzes electron transfer from ubiquinol to cytochrome c, linking this redox reaction to translocation of protons across the mitochondrial inner membrane, with protons being carried across the membrane as hydrogens on the quinol. In the process called Q cycle, 2 protons are consumed from the matrix, 4 protons are released into the intermembrane space and 2 electrons are passed to cytochrome c. The Rieske protein is a catalytic core subunit containing a [2Fe-2S] iron-sulfur cluster. It cycles between 2 conformational states during catalysis to transfer electrons from the quinol bound in the Q(0) site in cytochrome b to cytochrome c1. This Solanum tuberosum (Potato) protein is Cytochrome b-c1 complex subunit Rieske, mitochondrial (FES1).